The sequence spans 327 residues: Phenylalanine--tRNA ligase alpha subunit (327 aa).

Glu-252 is a Mg(2+) binding site.

The protein belongs to the class-II aminoacyl-tRNA synthetase family. Phe-tRNA synthetase alpha subunit type 1 subfamily. In terms of assembly, tetramer of two alpha and two beta subunits. The cofactor is Mg(2+).

The protein localises to the cytoplasm. It carries out the reaction tRNA(Phe) + L-phenylalanine + ATP = L-phenylalanyl-tRNA(Phe) + AMP + diphosphate + H(+). The sequence is that of Phenylalanine--tRNA ligase alpha subunit from Shewanella amazonensis (strain ATCC BAA-1098 / SB2B).